A 184-amino-acid chain; its full sequence is ATP synthase subunit b (184 aa).

The chain crosses the membrane as a helical span at residues 25–45 (IFPSWPIMLATLVSFTILLVV).

This sequence belongs to the ATPase B chain family. As to quaternary structure, F-type ATPases have 2 components, F(1) - the catalytic core - and F(0) - the membrane proton channel. F(1) has five subunits: alpha(3), beta(3), gamma(1), delta(1), epsilon(1). F(0) has three main subunits: a(1), b(2) and c(10-14). The alpha and beta chains form an alternating ring which encloses part of the gamma chain. F(1) is attached to F(0) by a central stalk formed by the gamma and epsilon chains, while a peripheral stalk is formed by the delta and b chains.

It localises to the cell membrane. Functionally, f(1)F(0) ATP synthase produces ATP from ADP in the presence of a proton or sodium gradient. F-type ATPases consist of two structural domains, F(1) containing the extramembraneous catalytic core and F(0) containing the membrane proton channel, linked together by a central stalk and a peripheral stalk. During catalysis, ATP synthesis in the catalytic domain of F(1) is coupled via a rotary mechanism of the central stalk subunits to proton translocation. Its function is as follows. Component of the F(0) channel, it forms part of the peripheral stalk, linking F(1) to F(0). This is ATP synthase subunit b from Mycoplasma mobile (strain ATCC 43663 / 163K / NCTC 11711) (Mesomycoplasma mobile).